Consider the following 198-residue polypeptide: Probable GTP-binding protein EngB (198 aa).

An EngB-type G domain is found at 36–198; it reads SEPQFAFIGR…NLSKLQELLE (163 aa). Residues 44-51, 70-74, 88-91, 155-158, and 182-184 each bind GTP; these read GRSNVGKS, GRTQL, DLPG, NKID, and ISA. Positions 51 and 72 each coordinate Mg(2+).

Belongs to the TRAFAC class TrmE-Era-EngA-EngB-Septin-like GTPase superfamily. EngB GTPase family. It depends on Mg(2+) as a cofactor.

Functionally, necessary for normal cell division and for the maintenance of normal septation. This is Probable GTP-binding protein EngB from Mesomycoplasma hyopneumoniae (strain 232) (Mycoplasma hyopneumoniae).